The primary structure comprises 389 residues: Multidrug resistance protein 1 (389 aa).

Transmembrane regions (helical) follow at residues 6 to 26 (ITLTILLTNLFIAFLGIGLVI), 42 to 62 (AVGYMVACFAITQLIVSPIAG), 71 to 91 (KIMIVIGLLFFSVSEFLFGIG), 102 to 122 (MLGGISAAFIMPGVTAFIADI), 134 to 154 (YMSAAISTGFIIGPGIGGFLA), 160 to 180 (LPFFFAAAFALLAAILSILTL), 202 to 222 (IFAPMYFIAFLIILISSFGLA), 243 to 263 (IAIMITGGAIVGAITQVVLFD), 286 to 306 (VFLLTTVHSYVAILLVTVTVF), 336 to 356 (SMFTSIGNVFGPIIGGMLFDI), and 358 to 378 (VNYPFYFATVTLAIGIALTIA).

This sequence belongs to the major facilitator superfamily. TCR/Tet family.

The protein resides in the cell membrane. In terms of biological role, energy-dependent efflux pump responsible for decreased drug accumulation in multi-drug-resistant cells. Probably uses a transmembrane proton gradient as the energy source. Causes the efflux of a variety of toxic substances, including such structurally diverse compounds as ethidium bromide, rhodamine and acridine dyes, tetraphenylphosphonium, puromycin, chloramphenicol, doxorubicin, and fluoroquinolone antibiotics. The chain is Multidrug resistance protein 1 (bmr) from Bacillus subtilis (strain 168).